We begin with the raw amino-acid sequence, 359 residues long: Opine dehydrogenase (359 aa).

It belongs to the lysopine/nopaline/octopine/opine/vitopine dehydrogenases family. As to quaternary structure, homodimer.

The enzyme catalyses (2S)-2-[(R)-1-carboxyethylamino]pentanoate + NAD(+) + H2O = L-2-aminopentanoate + pyruvate + NADH + H(+). Its function is as follows. In the forward direction also acts on secondary amine dicarboxylates such as N-(1-carboxyethyl)methionine and N-(1-carboxyethyl)phenylalanine. In the reverse direction, the enzyme also acts on neutral amino acids as an amino donor. They include L-amino acids such as 2-aminopentanoic acid, 2-aminobutyric acid, 2-aminohexanoic acid, 3-chloroalanine, O-acetylserine, methionine, isoleucine, valine, phenylalanine, leucine and alanine. In Arthrobacter sp. (strain 1C), this protein is Opine dehydrogenase (odh).